A 38-amino-acid chain; its full sequence is MTPSLGSFIASLFAGAFIALAIGGVLVFISQSDRVTRS.

A helical transmembrane segment spans residues 9–29; it reads IASLFAGAFIALAIGGVLVFI.

The protein belongs to the PsbX family. Type 1 subfamily. As to quaternary structure, PSII is composed of 1 copy each of membrane proteins PsbA, PsbB, PsbC, PsbD, PsbE, PsbF, PsbH, PsbI, PsbJ, PsbK, PsbL, PsbM, PsbT, PsbX, PsbY, PsbZ, Psb30/Ycf12, at least 3 peripheral proteins of the oxygen-evolving complex and a large number of cofactors. It forms dimeric complexes.

Its subcellular location is the plastid. It is found in the chloroplast thylakoid membrane. In terms of biological role, involved in the binding and/or turnover of quinones at the Q(B) site of photosystem II (PSII). PSII is a light-driven water plastoquinone oxidoreductase, using light energy to abstract electrons from H(2)O, generating a proton gradient subsequently used for ATP formation. The chain is Photosystem II reaction center protein X from Phaeodactylum tricornutum (strain CCAP 1055/1).